Consider the following 2054-residue polypeptide: Multiple PDZ domain protein (2054 aa).

The 61-residue stretch at 3 to 63 (ETIDKNRALQ…SLQQLKDQVN (61 aa)) folds into the L27 domain. The PDZ 1 domain maps to 138-225 (IFELLKPPCG…TIQLVIARGS (88 aa)). Ser-231 is modified (phosphoserine). PDZ domains lie at 258–338 (TIEL…ARGA), 377–463 (DVEL…MRKG), 545–626 (VAHV…CRRT), and 692–778 (AIEL…VAKP). Residues Ser-782 and Ser-1065 each carry the phosphoserine modification. The PDZ 6 domain maps to 995–1076 (TVTIAKGSSS…IGPDIKITYV (82 aa)). Residues 1110–1129 (PELPEREEGEGEESELQNAA) form a disordered region. Residues 1138 to 1230 (RVELWREPSK…PVVFMVQSIV (93 aa)) form the PDZ 7 domain. Arg-1157 carries the post-translational modification Omega-N-methylarginine. Residues 1261 to 1273 (LQLTSDKAPSQSE) show a composition bias toward polar residues. Positions 1261–1312 (LQLTSDKAPSQSESESEKATLCSVPSSSPSVFSEMSSDYAQPSATTVAEDED) are disordered. The segment covering 1283–1297 (SVPSSSPSVFSEMSS) has biased composition (low complexity). The 84-residue stretch at 1337–1420 (MIELEKGHSG…KVKIIFIRNA (84 aa)) folds into the PDZ 8 domain. Residues 1433–1454 (AADPLPSTSESPQNKEVEPSIT) are disordered. The region spanning 1470–1551 (HLELPKDQGG…TVKLTVGAEN (82 aa)) is the PDZ 9 domain. Residues 1560 to 1594 (AAVTASGERKDSSQTPAVPAPDLEPIPSTSRSSTP) form a disordered region. 2 consecutive PDZ domains span residues 1613–1696 (TIEI…YRDE) and 1709–1791 (TVEL…GRIK). The disordered stretch occupies residues 1795–1834 (FHSERRPSQSSQVSESSLSSFSLPRSGIHTSESSESSAKK). Phosphoserine occurs at positions 1802 and 1808. Residues 1802–1834 (SQSSQVSESSLSSFSLPRSGIHTSESSESSAKK) show a composition bias toward low complexity. 2 consecutive PDZ domains span residues 1846–1932 (TVEI…VAGG) and 1971–2054 (TITL…MVLS).

Interacts with F11R/JAM, CLDN1, NG2, CXADR, CRB1, MPP4 and PALS1, HTR2A, HTR2B, PLEKHA1/TAPP1 and PLEKHA2/TAPP2. Interacts with CXADR. Interacts with HTR2C, CLDN5, DLG4, GRIN1, SYNGAP1, CAMK2A and CAMK2B. Interacts with FAT4 (via cytoplasmic domain). Interacts with DLL1. Abundant in all cerebral cortical layers, especially the piriform cortex, the pyramidal cells of the CA1-CA3 subfields of the hippocampus, as well as the granular layer of the dentate gyrus. Detected in the internal granular layer and the mitral cell layer of the olfactory bulb; in the medial habenular nucleus; and in amygdaloid, thalamic, hypothalamic, and pontine nuclei. In the cerebellum, found at high levels in the granular layer. Detected in the lateral ventricle. Expression overlaps with 5-HT2C receptor expression in all regions of the brain including the choroid plexus, where 5-HT2C receptors are highly enriched.

It localises to the endomembrane system. Its subcellular location is the cell junction. It is found in the tight junction. The protein localises to the synapse. The protein resides in the apical cell membrane. It localises to the postsynaptic density. Its subcellular location is the cell projection. It is found in the dendrite. The protein localises to the synaptosome. In terms of biological role, member of the NMDAR signaling complex that may play a role in control of AMPAR potentiation and synaptic plasticity in excitatory synapses. Promotes clustering of HT2RC at the cell surface. This chain is Multiple PDZ domain protein (Mpdz), found in Rattus norvegicus (Rat).